Consider the following 149-residue polypeptide: Calmodulin (149 aa).

A2 carries the N-acetylalanine modification. EF-hand domains are found at residues 8-43, 44-79, 81-116, and 117-149; these read EQIAEFKEAFSLFDKDGDGTITTKELGTVMRSLGQN, PTEAELQDMINEVDADGNGTIDFPEFLSLMARKMKD, DTEEELIEAFKVFDRDGNGFISAAELRHVMTNLGEK, and LTDEEVDEMIREADVDGDGQINYEEFVKMMMAK. Ca(2+)-binding residues include D21, D23, D25, T27, E32, D57, D59, N61, T63, E68, D94, D96, N98, and E105. Residue K116 is modified to N6,N6,N6-trimethyllysine. D130, D132, D134, Q136, and E141 together coordinate Ca(2+).

This sequence belongs to the calmodulin family.

Calmodulin mediates the control of a large number of enzymes, ion channels and other proteins by Ca(2+). Among the enzymes to be stimulated by the calmodulin-Ca(2+) complex are a number of protein kinases and phosphatases. In Karlodinium veneficum (Dinoflagellate), this protein is Calmodulin.